An 857-amino-acid chain; its full sequence is Leucine--tRNA ligase (857 aa).

The 'HIGH' region motif lies at 42 to 52 (PYPSGKLHMGH). Positions 620-624 (KMSKS) match the 'KMSKS' region motif. Residue K623 coordinates ATP.

This sequence belongs to the class-I aminoacyl-tRNA synthetase family.

It is found in the cytoplasm. It carries out the reaction tRNA(Leu) + L-leucine + ATP = L-leucyl-tRNA(Leu) + AMP + diphosphate. This chain is Leucine--tRNA ligase, found in Thiobacillus denitrificans (strain ATCC 25259 / T1).